A 558-amino-acid polypeptide reads, in one-letter code: Arginine--tRNA ligase (558 aa).

A 'HIGH' region motif is present at residues 129–139; sequence ANPTGPLHVGH.

It belongs to the class-I aminoacyl-tRNA synthetase family. As to quaternary structure, monomer.

It is found in the cytoplasm. The enzyme catalyses tRNA(Arg) + L-arginine + ATP = L-arginyl-tRNA(Arg) + AMP + diphosphate. The protein is Arginine--tRNA ligase of Polaromonas naphthalenivorans (strain CJ2).